Here is a 510-residue protein sequence, read N- to C-terminus: NAD(P)H-quinone oxidoreductase subunit 2 A, chloroplastic (510 aa).

13 helical membrane-spanning segments follow: residues 24 to 44 (LLLF…GLIL), 57 to 77 (IPWL…ALLF), 99 to 119 (IFQF…VEYI), 124 to 144 (MAIT…MFLC), 149 to 169 (LITI…LSGY), 183 to 203 (YLLM…WLYG), 227 to 247 (PGIS…LSPA), 295 to 315 (WHLL…LIAI), 323 to 343 (MLAY…IVGD), 354 to 374 (YMLF…LFGL), 395 to 415 (ALSL…AGFF), 418 to 438 (LYLF…IGLL), and 484 to 504 (MIVC…IIAI).

This sequence belongs to the complex I subunit 2 family. In terms of assembly, NDH is composed of at least 16 different subunits, 5 of which are encoded in the nucleus.

It localises to the plastid. Its subcellular location is the chloroplast thylakoid membrane. The catalysed reaction is a plastoquinone + NADH + (n+1) H(+)(in) = a plastoquinol + NAD(+) + n H(+)(out). It carries out the reaction a plastoquinone + NADPH + (n+1) H(+)(in) = a plastoquinol + NADP(+) + n H(+)(out). Its function is as follows. NDH shuttles electrons from NAD(P)H:plastoquinone, via FMN and iron-sulfur (Fe-S) centers, to quinones in the photosynthetic chain and possibly in a chloroplast respiratory chain. The immediate electron acceptor for the enzyme in this species is believed to be plastoquinone. Couples the redox reaction to proton translocation, and thus conserves the redox energy in a proton gradient. The protein is NAD(P)H-quinone oxidoreductase subunit 2 A, chloroplastic of Solanum tuberosum (Potato).